A 197-amino-acid polypeptide reads, in one-letter code: Syndecan-4 (197 aa).

A signal peptide spans 1–19 (MPLPRAAFLLGLLLAAAAA). The Extracellular segment spans residues 20-147 (ESVRETETMD…SIFERTEVLT (128 aa)). 3 O-linked (Xyl...) (glycosaminoglycan) serine glycosylation sites follow: S38, S65, and S67. Residues N124 and N136 are each glycosylated (N-linked (GlcNAc...) asparagine). A helical membrane pass occupies residues 148–168 (ALIAGGAVGLLFAVFLILLLV). Over 169 to 197 (YRMKKKDEGSYDLGKKPIYKKAPTNEFYA) the chain is Cytoplasmic.

This sequence belongs to the syndecan proteoglycan family. In terms of assembly, interacts with SDOS. In terms of processing, O-glycosylated; contains both chondroitin sulfate and heparan sulfate. Ser-38, Ser-65 and Ser-67 can all be modified by either chondroitin sulfate or heparan sulfate, and the protein exists in forms that contain only chondroitin sulfate, only heparan sulfate and both chondroitin sulfate and heparan sulfate.

The protein localises to the membrane. In terms of biological role, cell surface proteoglycan which regulates exosome biogenesis in concert with SDCBP and PDCD6IP. The polypeptide is Syndecan-4 (SDC4) (Gallus gallus (Chicken)).